Consider the following 258-residue polypeptide: Archaerhodopsin-3 (258 aa).

Positions 1–6 (MDPIAL) are excised as a propeptide. A Pyrrolidone carboxylic acid modification is found at glutamine 7. Topologically, residues 7–18 (QAGYDLLGDGRP) are extracellular. A helical transmembrane segment spans residues 19-40 (ETLWLGIGTLLMLIGTFYFLVR). The Cytoplasmic portion of the chain corresponds to 41–49 (GWGVTDKDA). The chain crosses the membrane as a helical span at residues 50-71 (REYYAVTILVPGIASAAYLSMF). Topologically, residues 72–89 (FGIGLTEVTVGGEMLDIY) are extracellular. A helical transmembrane segment spans residues 90–111 (YARYADWLFTTPLLLLDLALLA). The Cytoplasmic segment spans residues 112 to 114 (KVD). The chain crosses the membrane as a helical span at residues 115–137 (RVTIGTLVGVDALMIVTGLIGAL). At 138–141 (SHTA) the chain is on the extracellular side. A helical transmembrane segment spans residues 142–170 (IARYSWWLFSTICMIVVLYFLATSLRSAA). Residues 171–173 (KER) lie on the Cytoplasmic side of the membrane. A helical transmembrane segment spans residues 174–202 (GPEVASTFNTLTALVLVLWTAYPILWIIG). The Extracellular segment spans residues 203–210 (TEGAGVVG). The helical transmembrane segment at 211-243 (LGIETLLFMVLDVTAKVGFGFILLRSRAILGDT) threads the bilayer. Lysine 226 carries the N6-(retinylidene)lysine modification. Topologically, residues 244–258 (EAPEPSAGADVSAAD) are cytoplasmic.

It belongs to the archaeal/bacterial/fungal opsin family.

The protein localises to the cell membrane. Its function is as follows. Light-driven proton pump. This Halorubrum sodomense protein is Archaerhodopsin-3 (aop3).